A 402-amino-acid polypeptide reads, in one-letter code: Argininosuccinate synthase (402 aa).

ATP-binding positions include 9–17 (AYSGGLDTS) and alanine 36. L-citrulline is bound by residues tyrosine 87 and serine 92. Glycine 117 provides a ligand contact to ATP. Residues threonine 119, asparagine 123, and aspartate 124 each coordinate L-aspartate. L-citrulline is bound at residue asparagine 123. L-citrulline is bound by residues arginine 127, serine 176, serine 185, glutamate 261, and tyrosine 273.

It belongs to the argininosuccinate synthase family. Type 1 subfamily. In terms of assembly, homotetramer.

The protein localises to the cytoplasm. It carries out the reaction L-citrulline + L-aspartate + ATP = 2-(N(omega)-L-arginino)succinate + AMP + diphosphate + H(+). The protein operates within amino-acid biosynthesis; L-arginine biosynthesis; L-arginine from L-ornithine and carbamoyl phosphate: step 2/3. In Deinococcus radiodurans (strain ATCC 13939 / DSM 20539 / JCM 16871 / CCUG 27074 / LMG 4051 / NBRC 15346 / NCIMB 9279 / VKM B-1422 / R1), this protein is Argininosuccinate synthase.